Here is a 192-residue protein sequence, read N- to C-terminus: MVVGLFGGSFNPPHEGHALVAEIAIKRLGLDQLWWMVTPGNPLKSRNLLAPLAERIAESERVAADPRIKVTAFEQALGVSYTANTLARVKARNPHVHFIWIMGADSLQTFHKWQKWQEIARTFPIAVIDRPGATLSYLSSKMTRTFDFARIDEDDARVLWKKPAPAWTFIHGPRSGLSSTAIRNGALPGAVG.

The protein belongs to the NadD family.

The catalysed reaction is nicotinate beta-D-ribonucleotide + ATP + H(+) = deamido-NAD(+) + diphosphate. It functions in the pathway cofactor biosynthesis; NAD(+) biosynthesis; deamido-NAD(+) from nicotinate D-ribonucleotide: step 1/1. In terms of biological role, catalyzes the reversible adenylation of nicotinate mononucleotide (NaMN) to nicotinic acid adenine dinucleotide (NaAD). The polypeptide is Probable nicotinate-nucleotide adenylyltransferase (Rhizobium etli (strain ATCC 51251 / DSM 11541 / JCM 21823 / NBRC 15573 / CFN 42)).